The primary structure comprises 442 residues: Transcription factor MYCFIDRAFT_198930 (442 aa).

The tract at residues 1–34 (MSTTPMAAPPGADLKPVTSSRGRSSTSDEQKLRS) is disordered. The segment at residues 36 to 63 (CESCAQSKLKCSGDKPACARCAKRGLAC) is a DNA-binding region (zn(2)-C6 fungal-type). Positions 74–107 (KPKGYTSTNDNNPSKRREDSHSPAASQWSSTGHL) are disordered. Residues 96–107 (PAASQWSSTGHL) show a composition bias toward polar residues.

It is found in the nucleus. Transcription factor that positively regulates the expression of the gene cluster that mediates the biosynthesis of an emodin derivative that may be involved in black Sigatoka disease of banana. This is Transcription factor MYCFIDRAFT_198930 from Pseudocercospora fijiensis (strain CIRAD86) (Black leaf streak disease fungus).